The following is a 481-amino-acid chain: Glutamyl-tRNA(Gln) amidotransferase subunit A (481 aa).

Active-site charge relay system residues include lysine 74 and serine 149. The Acyl-ester intermediate role is filled by serine 173.

This sequence belongs to the amidase family. GatA subfamily. As to quaternary structure, heterotrimer of A, B and C subunits.

The enzyme catalyses L-glutamyl-tRNA(Gln) + L-glutamine + ATP + H2O = L-glutaminyl-tRNA(Gln) + L-glutamate + ADP + phosphate + H(+). Its function is as follows. Allows the formation of correctly charged Gln-tRNA(Gln) through the transamidation of misacylated Glu-tRNA(Gln) in organisms which lack glutaminyl-tRNA synthetase. The reaction takes place in the presence of glutamine and ATP through an activated gamma-phospho-Glu-tRNA(Gln). This chain is Glutamyl-tRNA(Gln) amidotransferase subunit A, found in Francisella tularensis subsp. novicida (strain U112).